A 316-amino-acid polypeptide reads, in one-letter code: Ribosomal RNA small subunit methyltransferase H (316 aa).

S-adenosyl-L-methionine contacts are provided by residues 35–37, Asp55, Phe79, Asp101, and Gln108; that span reads GGH.

This sequence belongs to the methyltransferase superfamily. RsmH family.

Its subcellular location is the cytoplasm. It catalyses the reaction cytidine(1402) in 16S rRNA + S-adenosyl-L-methionine = N(4)-methylcytidine(1402) in 16S rRNA + S-adenosyl-L-homocysteine + H(+). In terms of biological role, specifically methylates the N4 position of cytidine in position 1402 (C1402) of 16S rRNA. This is Ribosomal RNA small subunit methyltransferase H from Vibrio proteolyticus (Aeromonas proteolytica).